A 179-amino-acid polypeptide reads, in one-letter code: Replication restart protein DnaT (179 aa).

Positions 156–179 (GGLPKRDVNTVSEPDSQIPPGFRG) are disordered.

This sequence belongs to the DnaT family. Homooligomerizes. Interacts with PriB. Component of the replication restart primosome. Primosome assembly occurs via a 'hand-off' mechanism. PriA binds to replication forks, subsequently PriB then DnaT bind; DnaT then displaces ssDNA to generate the helicase loading substrate.

Its function is as follows. Involved in the restart of stalled replication forks, which reloads the replicative helicase on sites other than the origin of replication. Can function in multiple replication restart pathways. Displaces ssDNA from a PriB-ssDNA complex. Probably forms a spiral filament on ssDNA. The protein is Replication restart protein DnaT of Escherichia coli O7:K1 (strain IAI39 / ExPEC).